We begin with the raw amino-acid sequence, 904 residues long: Phosphoenolpyruvate carboxylase (904 aa).

The segment at 52 to 71 (ISRRESDAPPSTLSEQLTGR) is disordered. Residues 60–70 (PPSTLSEQLTG) show a composition bias toward polar residues. Residues H151 and K570 contribute to the active site.

The protein belongs to the PEPCase type 1 family. Mg(2+) is required as a cofactor.

The catalysed reaction is oxaloacetate + phosphate = phosphoenolpyruvate + hydrogencarbonate. Functionally, forms oxaloacetate, a four-carbon dicarboxylic acid source for the tricarboxylic acid cycle. This is Phosphoenolpyruvate carboxylase from Xanthomonas euvesicatoria pv. vesicatoria (strain 85-10) (Xanthomonas campestris pv. vesicatoria).